The following is a 100-amino-acid chain: UPF0235 protein Cvib_0403 (100 aa).

It belongs to the UPF0235 family.

This chain is UPF0235 protein Cvib_0403, found in Chlorobium phaeovibrioides (strain DSM 265 / 1930) (Prosthecochloris vibrioformis (strain DSM 265)).